A 231-amino-acid chain; its full sequence is Ribose-5-phosphate isomerase A (231 aa).

Substrate is bound by residues 28-31, 83-86, and 96-99; these read TGST, DGAD, and KGGG. E105 serves as the catalytic Proton acceptor. Residue K123 participates in substrate binding.

This sequence belongs to the ribose 5-phosphate isomerase family. In terms of assembly, homodimer.

It catalyses the reaction aldehydo-D-ribose 5-phosphate = D-ribulose 5-phosphate. It functions in the pathway carbohydrate degradation; pentose phosphate pathway; D-ribose 5-phosphate from D-ribulose 5-phosphate (non-oxidative stage): step 1/1. Its function is as follows. Catalyzes the reversible conversion of ribose-5-phosphate to ribulose 5-phosphate. This is Ribose-5-phosphate isomerase A from Parvibaculum lavamentivorans (strain DS-1 / DSM 13023 / NCIMB 13966).